The following is a 481-amino-acid chain: RuvB-like helicase 2 (481 aa).

ATP is bound at residue 73–80 (GEPSTGKT). The tract at residues 453–481 (EEVERDPAAGGGAKRRVEGGGGDAQPMEH) is disordered.

It belongs to the RuvB family. Forms homohexameric rings. May form a dodecamer with rept made of two stacked hexameric rings. Component of the chromatin remodeling Ino80 complex. Interacts with Myc and pont. Higher expression occurs in primordia of mesoderm, anterior and posterior midgut and cephalic furrow early in gastrulation, as well as in endoderm and mesoderm lineages during germ band extension. Later in development expression is only maintained in endoderm cells. Expressed in thoracic and abdominal segment neural precursors of all embryonic chordotonal organs.

Its subcellular location is the nucleus. The enzyme catalyses ATP + H2O = ADP + phosphate + H(+). Functionally, acts as a transcriptional coactivator in Wg signaling caused by altered arm signaling. Pont and rept interfere antagonistically with nuclear arm signaling function, and are required to enhance or reduce arm activity, respectively. Also an essential cofactor for the normal function of Myc; required for cellular proliferation and growth. Proposed core component of the chromatin remodeling Ino80 complex which is involved in transcriptional regulation, DNA replication and probably DNA repair. The sequence is that of RuvB-like helicase 2 from Drosophila melanogaster (Fruit fly).